A 142-amino-acid chain; its full sequence is Putative pre-16S rRNA nuclease (142 aa).

The protein belongs to the YqgF nuclease family.

Its subcellular location is the cytoplasm. Could be a nuclease involved in processing of the 5'-end of pre-16S rRNA. The sequence is that of Putative pre-16S rRNA nuclease from Prosthecochloris aestuarii (strain DSM 271 / SK 413).